A 268-amino-acid polypeptide reads, in one-letter code: UDP-2,3-diacylglucosamine hydrolase (268 aa).

Asp-25, His-27, Asp-58, Asn-97, and His-132 together coordinate Mn(2+). 97-98 (NR) contributes to the substrate binding site. Substrate-binding residues include Asp-140, Ser-178, Glu-191, and His-222. Positions 222 and 224 each coordinate Mn(2+).

Belongs to the LpxH family. Mn(2+) is required as a cofactor.

The protein localises to the cell inner membrane. The catalysed reaction is UDP-2-N,3-O-bis[(3R)-3-hydroxytetradecanoyl]-alpha-D-glucosamine + H2O = 2-N,3-O-bis[(3R)-3-hydroxytetradecanoyl]-alpha-D-glucosaminyl 1-phosphate + UMP + 2 H(+). It functions in the pathway glycolipid biosynthesis; lipid IV(A) biosynthesis; lipid IV(A) from (3R)-3-hydroxytetradecanoyl-[acyl-carrier-protein] and UDP-N-acetyl-alpha-D-glucosamine: step 4/6. In terms of biological role, hydrolyzes the pyrophosphate bond of UDP-2,3-diacylglucosamine to yield 2,3-diacylglucosamine 1-phosphate (lipid X) and UMP by catalyzing the attack of water at the alpha-P atom. Involved in the biosynthesis of lipid A, a phosphorylated glycolipid that anchors the lipopolysaccharide to the outer membrane of the cell. The protein is UDP-2,3-diacylglucosamine hydrolase of Ralstonia nicotianae (strain ATCC BAA-1114 / GMI1000) (Ralstonia solanacearum).